Consider the following 108-residue polypeptide: UPF0145 protein SYNPCC7002_A1337 (108 aa).

This sequence belongs to the UPF0145 family.

This chain is UPF0145 protein SYNPCC7002_A1337, found in Picosynechococcus sp. (strain ATCC 27264 / PCC 7002 / PR-6) (Agmenellum quadruplicatum).